A 90-amino-acid polypeptide reads, in one-letter code: Small ribosomal subunit protein bS6 (90 aa).

Residue lysine 33 forms an Isoglutamyl lysine isopeptide (Lys-Gln) (interchain with Q-Cter in protein Pup) linkage.

Belongs to the bacterial ribosomal protein bS6 family.

In terms of biological role, binds together with bS18 to 16S ribosomal RNA. This chain is Small ribosomal subunit protein bS6 (rpsF), found in Mycolicibacterium smegmatis (strain ATCC 700084 / mc(2)155) (Mycobacterium smegmatis).